A 90-amino-acid chain; its full sequence is Acylphosphatase (90 aa).

The 88-residue stretch at 3-90 folds into the Acylphosphatase-like domain; the sequence is QYRIIVDGRV…DGFQKFNISY (88 aa). Catalysis depends on residues R18 and N36.

The protein belongs to the acylphosphatase family.

It carries out the reaction an acyl phosphate + H2O = a carboxylate + phosphate + H(+). This Bacillus licheniformis (strain ATCC 14580 / DSM 13 / JCM 2505 / CCUG 7422 / NBRC 12200 / NCIMB 9375 / NCTC 10341 / NRRL NRS-1264 / Gibson 46) protein is Acylphosphatase (acyP).